The sequence spans 192 residues: Peptidyl-tRNA hydrolase (192 aa).

The active-site Proton acceptor is H19. Residues Y64, N66, and N112 each coordinate tRNA.

It belongs to the PTH family. As to quaternary structure, monomer.

The protein localises to the cytoplasm. The catalysed reaction is an N-acyl-L-alpha-aminoacyl-tRNA + H2O = an N-acyl-L-amino acid + a tRNA + H(+). In terms of biological role, hydrolyzes ribosome-free peptidyl-tRNAs (with 1 or more amino acids incorporated), which drop off the ribosome during protein synthesis, or as a result of ribosome stalling. Catalyzes the release of premature peptidyl moieties from peptidyl-tRNA molecules trapped in stalled 50S ribosomal subunits, and thus maintains levels of free tRNAs and 50S ribosomes. The polypeptide is Peptidyl-tRNA hydrolase (Acidiphilium cryptum (strain JF-5)).